The chain runs to 122 residues: Small ribosomal subunit protein uS13 (122 aa).

The interval Pro97 to Lys122 is disordered.

It belongs to the universal ribosomal protein uS13 family. As to quaternary structure, part of the 30S ribosomal subunit. Forms a loose heterodimer with protein S19. Forms two bridges to the 50S subunit in the 70S ribosome.

Functionally, located at the top of the head of the 30S subunit, it contacts several helices of the 16S rRNA. In the 70S ribosome it contacts the 23S rRNA (bridge B1a) and protein L5 of the 50S subunit (bridge B1b), connecting the 2 subunits; these bridges are implicated in subunit movement. Contacts the tRNAs in the A and P-sites. In Bartonella henselae (strain ATCC 49882 / DSM 28221 / CCUG 30454 / Houston 1) (Rochalimaea henselae), this protein is Small ribosomal subunit protein uS13.